We begin with the raw amino-acid sequence, 247 residues long: Protein-L-isoaspartate O-methyltransferase 2 (247 aa).

Ser97 is an active-site residue.

The protein belongs to the methyltransferase superfamily. L-isoaspartyl/D-aspartyl protein methyltransferase family.

It is found in the cytoplasm. The catalysed reaction is [protein]-L-isoaspartate + S-adenosyl-L-methionine = [protein]-L-isoaspartate alpha-methyl ester + S-adenosyl-L-homocysteine. In terms of biological role, catalyzes the methyl esterification of L-isoaspartyl residues in peptides and proteins that result from spontaneous decomposition of normal L-aspartyl and L-asparaginyl residues. It plays a role in the repair and/or degradation of damaged proteins. The chain is Protein-L-isoaspartate O-methyltransferase 2 from Syntrophobacter fumaroxidans (strain DSM 10017 / MPOB).